Here is a 480-residue protein sequence, read N- to C-terminus: Major facilitator superfamily domain-containing protein 12 (480 aa).

Position 1 is an N-acetylmethionine (M1). The Cytoplasmic segment spans residues M1–A26. A helical membrane pass occupies residues V27–L47. Topologically, residues H48–R56 are lumenal. The helical transmembrane segment at G57 to G77 threads the bilayer. The Cytoplasmic segment spans residues Y78–H97. The chain crosses the membrane as a helical span at residues L98 to C118. Over G119 to E124 the chain is Lumenal. Residues W125 to T145 form a helical membrane-spanning segment. Topologically, residues Q146 to R170 are cytoplasmic. The chain crosses the membrane as a helical span at residues Y171 to L191. The Lumenal portion of the chain corresponds to Q192–R218. Residues N219–T239 form a helical membrane-spanning segment. Residues R240–Q279 lie on the Cytoplasmic side of the membrane. The residue at position 254 (T254) is a Phosphothreonine; by MTOR. A helical membrane pass occupies residues V280 to L302. Residues T303 to K310 lie on the Lumenal side of the membrane. Residues K311 to M331 traverse the membrane as a helical segment. The Cytoplasmic segment spans residues K332 to G347. 2 consecutive transmembrane segments (helical) span residues L348–V368 and Y369–M389. The Cytoplasmic portion of the chain corresponds to T390–A402. The helical transmembrane segment at F403 to I423 threads the bilayer. Residues Q424 to M446 lie on the Lumenal side of the membrane. A helical transmembrane segment spans residues V447–W467. Residues P468 to P480 lie on the Cytoplasmic side of the membrane.

It belongs to the major facilitator superfamily. Post-translationally, phosphorylation at Thr-254 by MTOR via mTORC1 pathway promotes cysteine transport in lysosomes, thereby regulating lysosomal cysteine and cystine storage and redox homeostasis. Widely expressed, with high expression in primary melanocytes.

It is found in the melanosome membrane. It localises to the lysosome membrane. The enzyme catalyses L-cysteine(in) = L-cysteine(out). Functionally, transporter that mediates the import of cysteine into melanosomes, thereby regulating skin pigmentation. In melanosomes, cysteine import is required both for normal levels of cystine, the oxidized dimer of cysteine, and provide cysteine for the production of the cysteinyldopas used in pheomelanin synthesis, thereby regulating skin pigmentation. Also catalyzes import of cysteine into lysosomes in non-pigmented cells, regulating lysosomal cystine and cysteine storage, which is essnetial for redox homeostasis. The chain is Major facilitator superfamily domain-containing protein 12 from Homo sapiens (Human).